Consider the following 242-residue polypeptide: Carboxy-S-adenosyl-L-methionine synthase (242 aa).

Residues Tyr-39, 64–66, 89–90, 117–118, Asn-132, and Arg-199 each bind S-adenosyl-L-methionine; these read GCS, DN, and DI.

Belongs to the class I-like SAM-binding methyltransferase superfamily. Cx-SAM synthase family. Homodimer.

It catalyses the reaction prephenate + S-adenosyl-L-methionine = carboxy-S-adenosyl-L-methionine + 3-phenylpyruvate + H2O. Its function is as follows. Catalyzes the conversion of S-adenosyl-L-methionine (SAM) to carboxy-S-adenosyl-L-methionine (Cx-SAM). The sequence is that of Carboxy-S-adenosyl-L-methionine synthase from Psychromonas ingrahamii (strain DSM 17664 / CCUG 51855 / 37).